Consider the following 596-residue polypeptide: Actin-histidine N-methyltransferase (596 aa).

The tract at residues 1–22 (MGKKSRVKTQKSGTGATATVSP) is disordered. Positions 10–20 (QKSGTGATATV) are enriched in polar residues. S-adenosyl-L-methionine contacts are provided by residues R75, 104-106 (EGF), R254, 275-279 (DMCNH), and 325-327 (SGF). One can recognise an SET domain in the interval 94 to 314 (EGFEMVNFKE…AGDQIYIFYG (221 aa)). The segment at 551 to 596 (GLVNGESLIPNGTRSENESLSPEESENTTGDTEESSGSMDAVKERL) is disordered. Residues 571 to 584 (SPEESENTTGDTEE) are compositionally biased toward acidic residues.

This sequence belongs to the class V-like SAM-binding methyltransferase superfamily. SETD3 actin-histidine methyltransferase family. As to quaternary structure, interacts with MYOD1. Phosphorylated by GSK3B, which is required for recognition by the SCF(FBXW7) complex and subsequent degradation. Post-translationally, ubiquitinated by the SCF(FBXW7) complex following phosphorylation by GSK3B, leading to its degradation by the proteasome.

Its subcellular location is the cytoplasm. The protein localises to the nucleus. It catalyses the reaction L-histidyl-[protein] + S-adenosyl-L-methionine = N(tele)-methyl-L-histidyl-[protein] + S-adenosyl-L-homocysteine + H(+). Protein-histidine N-methyltransferase that specifically mediates 3-methylhistidine (tele-methylhistidine) methylation of actin at 'His-73'. Histidine methylation of actin is required for smooth muscle contraction of the laboring uterus during delivery. Does not have protein-lysine N-methyltransferase activity and probably only catalyzes histidine methylation of actin. This is Actin-histidine N-methyltransferase from Rattus norvegicus (Rat).